A 323-amino-acid polypeptide reads, in one-letter code: Beta-ketoacyl-[acyl-carrier-protein] synthase III (323 aa).

Active-site residues include Cys-113 and His-250. The interval 251–255 (QANKR) is ACP-binding. The active site involves Asn-280.

This sequence belongs to the thiolase-like superfamily. FabH family. In terms of assembly, homodimer.

The protein resides in the cytoplasm. The enzyme catalyses malonyl-[ACP] + acetyl-CoA + H(+) = 3-oxobutanoyl-[ACP] + CO2 + CoA. The protein operates within lipid metabolism; fatty acid biosynthesis. Functionally, catalyzes the condensation reaction of fatty acid synthesis by the addition to an acyl acceptor of two carbons from malonyl-ACP. Catalyzes the first condensation reaction which initiates fatty acid synthesis and may therefore play a role in governing the total rate of fatty acid production. Possesses both acetoacetyl-ACP synthase and acetyl transacylase activities. Its substrate specificity determines the biosynthesis of branched-chain and/or straight-chain of fatty acids. The sequence is that of Beta-ketoacyl-[acyl-carrier-protein] synthase III from Agrobacterium fabrum (strain C58 / ATCC 33970) (Agrobacterium tumefaciens (strain C58)).